The chain runs to 371 residues: Macrolide export protein MacA (371 aa).

Topologically, residues 1-10 (MKKRKTVKKR) are cytoplasmic. The chain crosses the membrane as a helical span at residues 11–31 (YVIALVIVIAGLITLWRILNA). Topologically, residues 32–371 (PVPTYQTLIV…IGEAKPGAAQ (340 aa)) are periplasmic. Positions 92–137 (IDPEQAENQIKEVEATLMELRAQRQQAEAELKLARVTYSRQQRLAQ) form a coiled coil.

Belongs to the membrane fusion protein (MFP) (TC 8.A.1) family. In terms of assembly, homohexamer. Part of the tripartite efflux system MacAB-TolC, which is composed of an inner membrane transporter, MacB, a periplasmic membrane fusion protein, MacA, and an outer membrane component, TolC. The complex forms a large protein conduit and can translocate molecules across both the inner and outer membranes. MacA interacts with MacB and TolC.

The protein resides in the cell inner membrane. Its function is as follows. Part of the tripartite efflux system MacAB-TolC. MacA stimulates the ATPase activity of MacB by promoting the closed ATP-bound state of MacB, increases the capacity of MacB to bind macrolides such as erythromycin, and provides a physical link between MacB and TolC. Confers resistance against macrolides. The chain is Macrolide export protein MacA (macA) from Escherichia coli O157:H7.